The sequence spans 55 residues: Light-harvesting polypeptide B-800/860 beta chain (55 aa).

Topologically, residues 1–21 (ADANKVWPTGLTVAEAEELHT) are cytoplasmic. Residues 22–44 (YVTNGFRVFVGIAVVAHVLVFAA) form a helical membrane-spanning segment. His38 lines the a bacteriochlorophyll pocket. At 45–55 (HPWGRGGALVA) the chain is on the periplasmic side.

Belongs to the antenna complex beta subunit family. As to quaternary structure, the core complex is formed by different alpha and beta chains, binding bacteriochlorophyll molecules, and arranged most probably in tetrameric structures disposed around the reaction center. The non-pigmented gamma chains may constitute additional components.

The protein localises to the cell inner membrane. Functionally, antenna complexes are light-harvesting systems, which transfer the excitation energy to the reaction centers. This Rhodocyclus tenuis (Rhodospirillum tenue) protein is Light-harvesting polypeptide B-800/860 beta chain.